An 828-amino-acid polypeptide reads, in one-letter code: DNA gyrase subunit A (828 aa).

Residues 32-497 enclose the Topo IIA-type catalytic domain; the sequence is LPDVRDGLKP…EVLSLEDEDL (466 aa). The active-site O-(5'-phospho-DNA)-tyrosine intermediate is Tyr-120. The GyrA-box motif lies at 524–530; that stretch reads QKRGGRG.

Belongs to the type II topoisomerase GyrA/ParC subunit family. In terms of assembly, heterotetramer, composed of two GyrA and two GyrB chains. In the heterotetramer, GyrA contains the active site tyrosine that forms a transient covalent intermediate with DNA, while GyrB binds cofactors and catalyzes ATP hydrolysis.

It localises to the cytoplasm. The catalysed reaction is ATP-dependent breakage, passage and rejoining of double-stranded DNA.. Its function is as follows. A type II topoisomerase that negatively supercoils closed circular double-stranded (ds) DNA in an ATP-dependent manner to modulate DNA topology and maintain chromosomes in an underwound state. Negative supercoiling favors strand separation, and DNA replication, transcription, recombination and repair, all of which involve strand separation. Also able to catalyze the interconversion of other topological isomers of dsDNA rings, including catenanes and knotted rings. Type II topoisomerases break and join 2 DNA strands simultaneously in an ATP-dependent manner. The sequence is that of DNA gyrase subunit A from Streptococcus pyogenes serotype M3 (strain ATCC BAA-595 / MGAS315).